The primary structure comprises 351 residues: DNA polymerase IV (351 aa).

The UmuC domain occupies 4–185; sequence IIHVDMDCFF…LPLAKIPGVG (182 aa). The Mg(2+) site is built by Asp-8 and Asp-103. The active site involves Glu-104.

The protein belongs to the DNA polymerase type-Y family. Monomer. Mg(2+) is required as a cofactor.

The protein resides in the cytoplasm. The catalysed reaction is DNA(n) + a 2'-deoxyribonucleoside 5'-triphosphate = DNA(n+1) + diphosphate. Its function is as follows. Poorly processive, error-prone DNA polymerase involved in untargeted mutagenesis. Copies undamaged DNA at stalled replication forks, which arise in vivo from mismatched or misaligned primer ends. These misaligned primers can be extended by PolIV. Exhibits no 3'-5' exonuclease (proofreading) activity. May be involved in translesional synthesis, in conjunction with the beta clamp from PolIII. This Escherichia coli O157:H7 protein is DNA polymerase IV.